We begin with the raw amino-acid sequence, 310 residues long: Methionyl-tRNA formyltransferase (310 aa).

111 to 114 (SILP) provides a ligand contact to (6S)-5,6,7,8-tetrahydrofolate.

Belongs to the Fmt family.

The enzyme catalyses L-methionyl-tRNA(fMet) + (6R)-10-formyltetrahydrofolate = N-formyl-L-methionyl-tRNA(fMet) + (6S)-5,6,7,8-tetrahydrofolate + H(+). In terms of biological role, attaches a formyl group to the free amino group of methionyl-tRNA(fMet). The formyl group appears to play a dual role in the initiator identity of N-formylmethionyl-tRNA by promoting its recognition by IF2 and preventing the misappropriation of this tRNA by the elongation apparatus. The polypeptide is Methionyl-tRNA formyltransferase (Methylobacterium sp. (strain 4-46)).